A 371-amino-acid polypeptide reads, in one-letter code: tRNA-specific 2-thiouridylase MnmA (371 aa).

Residues 9–16 (AMSGGVDS) and Met35 each bind ATP. Cys109 acts as the Nucleophile in catalysis. Cysteines 109 and 207 form a disulfide. Gly133 lines the ATP pocket. Residues 157–159 (KDQ) form an interaction with tRNA region. Residue Cys207 is the Cysteine persulfide intermediate of the active site.

Belongs to the MnmA/TRMU family.

Its subcellular location is the cytoplasm. It catalyses the reaction S-sulfanyl-L-cysteinyl-[protein] + uridine(34) in tRNA + AH2 + ATP = 2-thiouridine(34) in tRNA + L-cysteinyl-[protein] + A + AMP + diphosphate + H(+). Catalyzes the 2-thiolation of uridine at the wobble position (U34) of tRNA, leading to the formation of s(2)U34. This chain is tRNA-specific 2-thiouridylase MnmA, found in Solibacter usitatus (strain Ellin6076).